Consider the following 396-residue polypeptide: MAKGKFERTKPHVNVGTIGHVDHGKTTLTAAITTILSKKFGGEAKAYDQIDAAPEEKARGITINTAHVEYETANRHYAHVDCPGHADYVKNMITGAAQMDGAILVCSAADGPMPQTREHILLARQVGVPYIIVFLNKCDMVDDEELLELVEMEVRELLSKYDFPGDDVPIIKGSALKALEGDQSDIGEPAIFRLAEALDSYIPTPERAIDRPFLLPIEDVFSISGRGTVVTGRVERGIVKVGEEVEIVGIKATVKTTCTGVEMFRKLLDQGQAGDNVGVLLRGTKREDVERGQVLCKPGSIKPHTHFTGEVYVLSKEEGGRHTPFFNNYRPQFYFRTTDVTGSIELPEGTEMVMPGDNVSITVKLMAPIAMEEGLRFAIREGGRTVGAGVVAKIIE.

The region spanning 10-206 (KPHVNVGTIG…ALDSYIPTPE (197 aa)) is the tr-type G domain. Residues 19–26 (GHVDHGKT) are G1. Residue 19 to 26 (GHVDHGKT) participates in GTP binding. T26 is a binding site for Mg(2+). The G2 stretch occupies residues 60–64 (GITIN). The G3 stretch occupies residues 81–84 (DCPG). Residues 81–85 (DCPGH) and 136–139 (NKCD) contribute to the GTP site. Residues 136–139 (NKCD) form a G4 region. Positions 174–176 (SAL) are G5.

Belongs to the TRAFAC class translation factor GTPase superfamily. Classic translation factor GTPase family. EF-Tu/EF-1A subfamily. As to quaternary structure, monomer.

The protein localises to the cytoplasm. The catalysed reaction is GTP + H2O = GDP + phosphate + H(+). Functionally, GTP hydrolase that promotes the GTP-dependent binding of aminoacyl-tRNA to the A-site of ribosomes during protein biosynthesis. The polypeptide is Elongation factor Tu (Aromatoleum aromaticum (strain DSM 19018 / LMG 30748 / EbN1) (Azoarcus sp. (strain EbN1))).